Reading from the N-terminus, the 115-residue chain is Large ribosomal subunit protein bL19 (115 aa).

Belongs to the bacterial ribosomal protein bL19 family.

Its function is as follows. This protein is located at the 30S-50S ribosomal subunit interface and may play a role in the structure and function of the aminoacyl-tRNA binding site. The protein is Large ribosomal subunit protein bL19 of Streptococcus uberis (strain ATCC BAA-854 / 0140J).